The chain runs to 862 residues: Eukaryotic translation initiation factor 3 subunit C (862 aa).

The span at 1-10 shows a compositional bias: gly residues; the sequence is MSRFFYGGGS. Residues 1 to 81 form a disordered region; sequence MSRFFYGGGS…DEEKTTVVKS (81 aa). Acidic residues predominate over residues 16–52; the sequence is SSDEEELYERDEEEQSEEEESSEEEETSEEGSDDEEG. Residues 601-775 form the PCI domain; it reads FHMHINLELL…GAIVFRKGVE (175 aa). The interval 814 to 862 is disordered; that stretch reads RDQGAGARGGRGGGRGGHARGGARFPGQQGRRPGGQQFGGGALGGAIKA. Residues 819–833 show a composition bias toward gly residues; it reads GARGGRGGGRGGHAR. A compositionally biased stretch (low complexity) spans 835 to 844; sequence GARFPGQQGR. Over residues 845–862 the composition is skewed to gly residues; it reads RPGGQQFGGGALGGAIKA.

Belongs to the eIF-3 subunit C family. Component of the eukaryotic translation initiation factor 3 (eIF-3) complex.

It localises to the cytoplasm. Its function is as follows. Component of the eukaryotic translation initiation factor 3 (eIF-3) complex, which is involved in protein synthesis of a specialized repertoire of mRNAs and, together with other initiation factors, stimulates binding of mRNA and methionyl-tRNAi to the 40S ribosome. The eIF-3 complex specifically targets and initiates translation of a subset of mRNAs involved in cell proliferation. The polypeptide is Eukaryotic translation initiation factor 3 subunit C (nip1) (Aspergillus clavatus (strain ATCC 1007 / CBS 513.65 / DSM 816 / NCTC 3887 / NRRL 1 / QM 1276 / 107)).